Consider the following 3623-residue polypeptide: Cubilin (3623 aa).

The first 23 residues, 1-23 (MMNMSLPFLWSLLTLLIFAEVNG), serve as a signal peptide directing secretion. A propeptide spans 24 to 35 (EAGELELQRQKR) (removed in mature form). Residues 42–49 (PRMATERG) form an interaction with AMN region. N-linked (GlcNAc...) asparagine glycosylation occurs at asparagine 105. The EGF-like 1 domain occupies 132-168 (DKKVCSSNPCQNGGTCLNLHDSFFCICPPQWKGPLCS). 9 disulfide bridges follow: cysteine 136–cysteine 147, cysteine 141–cysteine 156, cysteine 158–cysteine 167, cysteine 174–cysteine 190, cysteine 184–cysteine 199, cysteine 201–cysteine 210, cysteine 267–cysteine 280, cysteine 274–cysteine 289, and cysteine 292–cysteine 303. The 42-residue stretch at 170–211 (DVNECEIYSGTPLSCQNGGTCVNTMGSYSCHCPPETYGPQCA) folds into the EGF-like 2; calcium-binding domain. In terms of domain architecture, EGF-like 3; calcium-binding spans 263 to 304 (DRDECSFQPGPCSTLVQCFNTQGSFYCGACPTGWQGNGYICE). The 44-residue stretch at 305–348 (DINECEINNGGCSVAPPVECVNTPGSSHCQACPPGYQGDGRVCT) folds into the EGF-like 4; calcium-binding domain. 2 consecutive EGF-like domains span residues 349–385 (LTDICSVSNGGCHPDASCSSTLGSLPLCTCLPGYTGN) and 395–430 (LSNICLSHPCLNGQCIDTVSGYFCKCDSGWTGVNCT). 13 cysteine pairs are disulfide-bonded: cysteine 353–cysteine 366, cysteine 360–cysteine 376, cysteine 399–cysteine 409, cysteine 404–cysteine 418, cysteine 420–cysteine 429, cysteine 436–cysteine 447, cysteine 441–cysteine 456, cysteine 458–cysteine 467, cysteine 474–cysteine 500, cysteine 527–cysteine 549, cysteine 590–cysteine 616, cysteine 643–cysteine 665, and cysteine 708–cysteine 734. A glycan (N-linked (GlcNAc...) asparagine) is linked at asparagine 428. The region spanning 432-468 (NINECLSNPCLNGGTCVDGVDSFSCECTRLWTGALCQ) is the EGF-like 7; calcium-binding domain. 27 consecutive CUB domains span residues 474–586 (CGES…WETQ), 590–702 (CGGI…YLTS), 708–816 (CGGN…YQVA), 816–928 (ACGD…FSAE), 932–1042 (CGEI…YEAI), 1048–1161 (CLQD…WDGS), 1165–1277 (CGGN…YRQT), 1278–1389 (CENV…WFVY), 1391–1506 (CGGE…WQAV), 1510–1619 (CGGI…FRQA), 1620–1734 (CGGH…VTAS), 1738–1850 (CGGT…FMKI), 1852–1963 (GNDN…WFAV), 1978–2091 (CGGF…FHKS), 2092–2213 (CGGY…YEAK), 2217–2334 (CGGN…YSIA), 2336–2448 (CGGR…FESS), 2452–2565 (CGGD…YTSS), 2570–2687 (CGGS…YSFT), 2689–2801 (CGGI…WNTQ), 2805–2919 (CGGI…FVSR), 2920–3035 (CGSN…YRII), 3037–3150 (CGGV…FRQT), 3157–3274 (CGGY…YTIM), 3278–3393 (CGGT…YQIA), 3395–3507 (CNRD…WTSS), and 3511–3623 (CGGT…TWDS). Asparagine 482 carries an N-linked (GlcNAc...) asparagine glycan. Residues asparagine 711, asparagine 749, asparagine 781, and asparagine 857 are each glycosylated (N-linked (GlcNAc...) asparagine). Intrachain disulfides connect cysteine 869/cysteine 891 and cysteine 932/cysteine 958. Residue asparagine 957 is glycosylated (N-linked (GlcNAc...) asparagine). Glutamate 980 is a binding site for Ca(2+). N-linked (GlcNAc...) asparagine glycosylation occurs at asparagine 984. Cysteine 985 and cysteine 1005 form a disulfide bridge. The Ca(2+) site is built by aspartate 988, aspartate 1027, aspartate 1029, and leucine 1030. Cysteines 1048 and 1074 form a disulfide. Asparagine 1092 carries an N-linked (GlcNAc...) asparagine glycan. Ca(2+) is bound by residues glutamate 1096, aspartate 1105, aspartate 1146, isoleucine 1148, and aspartate 1149. Cysteines 1165 and 1191 form a disulfide. Asparagine 1168 carries N-linked (GlcNAc...) asparagine glycosylation. Residue glutamate 1213 coordinates Ca(2+). N-linked (GlcNAc...) asparagine glycosylation is present at asparagine 1217. A disulfide bond links cysteine 1218 and cysteine 1240. The Ca(2+) site is built by aspartate 1221, aspartate 1262, glycine 1264, and glutamine 1265. A disulfide bridge links cysteine 1278 with cysteine 1306. Residues asparagine 1285, asparagine 1307, and asparagine 1319 are each glycosylated (N-linked (GlcNAc...) asparagine). Glutamate 1328 contacts Ca(2+). Residue asparagine 1332 is glycosylated (N-linked (GlcNAc...) asparagine). Cysteine 1333 and cysteine 1351 are disulfide-bonded. Residues aspartate 1336, aspartate 1373, and valine 1375 each contribute to the Ca(2+) site. 2 disulfide bridges follow: cysteine 1391–cysteine 1417 and cysteine 1444–cysteine 1466. The N-linked (GlcNAc...) asparagine glycan is linked to asparagine 1500. A disulfide bridge connects residues cysteine 1510 and cysteine 1536. Asparagine 1551 is a glycosylation site (N-linked (GlcNAc...) asparagine). 5 disulfides stabilise this stretch: cysteine 1563–cysteine 1581, cysteine 1620–cysteine 1647, cysteine 1675–cysteine 1697, cysteine 1738–cysteine 1764, and cysteine 1791–cysteine 1812. An N-linked (GlcNAc...) asparagine glycan is attached at asparagine 1646. 3 N-linked (GlcNAc...) asparagine glycosylation sites follow: asparagine 1802, asparagine 1819, and asparagine 1885. Disulfide bonds link cysteine 1905-cysteine 1927, cysteine 1978-cysteine 2006, and cysteine 2032-cysteine 2054. Asparagine 2085 and asparagine 2117 each carry an N-linked (GlcNAc...) asparagine glycan. 2 disulfide bridges follow: cysteine 2092–cysteine 2118 and cysteine 2217–cysteine 2247. Asparagine 2274 carries N-linked (GlcNAc...) asparagine glycosylation. Disulfide bonds link cysteine 2275–cysteine 2297 and cysteine 2336–cysteine 2363. N-linked (GlcNAc...) asparagine glycosylation is found at asparagine 2386 and asparagine 2400. Intrachain disulfides connect cysteine 2390/cysteine 2411, cysteine 2452/cysteine 2478, and cysteine 2505/cysteine 2527. Residues asparagine 2531, asparagine 2581, asparagine 2592, and asparagine 2610 are each glycosylated (N-linked (GlcNAc...) asparagine). A disulfide bridge connects residues cysteine 2570 and cysteine 2599. 7 disulfides stabilise this stretch: cysteine 2628/cysteine 2649, cysteine 2689/cysteine 2715, cysteine 2742/cysteine 2764, cysteine 2805/cysteine 2831, cysteine 2860/cysteine 2883, cysteine 2920/cysteine 2946, and cysteine 2977/cysteine 2999. N-linked (GlcNAc...) asparagine glycosylation is present at asparagine 2813. Asparagine 2923 and asparagine 2945 each carry an N-linked (GlcNAc...) asparagine glycan. Threonine 3008 bears the Phosphothreonine mark. 2 cysteine pairs are disulfide-bonded: cysteine 3037–cysteine 3064 and cysteine 3091–cysteine 3113. Asparagine 3042, asparagine 3103, asparagine 3125, and asparagine 3165 each carry an N-linked (GlcNAc...) asparagine glycan. 2 cysteine pairs are disulfide-bonded: cysteine 3157/cysteine 3185 and cysteine 3215/cysteine 3237. Residues asparagine 3268, asparagine 3283, asparagine 3290, and asparagine 3295 are each glycosylated (N-linked (GlcNAc...) asparagine). 2 disulfide bridges follow: cysteine 3278/cysteine 3306 and cysteine 3332/cysteine 3354. Asparagine 3357 carries N-linked (GlcNAc...) asparagine glycosylation. A disulfide bond links cysteine 3395 and cysteine 3421. Residues asparagine 3430, asparagine 3457, asparagine 3533, and asparagine 3576 are each glycosylated (N-linked (GlcNAc...) asparagine). Disulfide bonds link cysteine 3448–cysteine 3470, cysteine 3511–cysteine 3537, and cysteine 3564–cysteine 3586.

Interacts with AMN. Component of the cubam complex composed of one CUBN trimer and one AMN chain. The cubam complex can dimerize. Interacts with LRP2 in a dual-receptor complex in a calcium-dependent manner. Found in a complex with PID1/PCLI1, LRP1 and CUBNI. Interacts with LRP1 and PID1/PCLI1. In terms of processing, the precursor is cleaved by a trans-Golgi proteinase furin, removing a propeptide. Post-translationally, N-glycosylated. In terms of tissue distribution, detected in kidney cortex (at protein level). Expressed in kidney proximal tubule cells, placenta, visceral yolk-sac cells and in absorptive intestinal cells. Expressed in the epithelium of intestine and kidney.

The protein resides in the apical cell membrane. The protein localises to the cell membrane. It localises to the membrane. Its subcellular location is the coated pit. It is found in the endosome. The protein resides in the lysosome membrane. Endocytic receptor which plays a role in lipoprotein, vitamin and iron metabolism by facilitating their uptake. Acts together with LRP2 to mediate endocytosis of high-density lipoproteins, GC, hemoglobin, ALB, TF and SCGB1A1. Acts together with AMN to mediate endocytosis of the CBLIF-cobalamin complex. Binds to ALB, MB, Kappa and lambda-light chains, TF, hemoglobin, GC, SCGB1A1, APOA1, high density lipoprotein, and the CBLIF-cobalamin complex. Ligand binding requires calcium. Serves as important transporter in several absorptive epithelia, including intestine, renal proximal tubules and embryonic yolk sac. May play an important role in the development of the peri-implantation embryo through internalization of APOA1 and cholesterol. Binds to LGALS3 at the maternal-fetal interface. This chain is Cubilin (CUBN), found in Homo sapiens (Human).